A 568-amino-acid chain; its full sequence is Glucose-6-phosphate isomerase, cytosolic 1 (568 aa).

Catalysis depends on glutamate 360, which acts as the Proton donor. Active-site residues include histidine 391 and lysine 516.

Belongs to the GPI family. In terms of assembly, homodimer.

Its subcellular location is the cytoplasm. It catalyses the reaction alpha-D-glucose 6-phosphate = beta-D-fructose 6-phosphate. The protein operates within carbohydrate degradation; glycolysis; D-glyceraldehyde 3-phosphate and glycerone phosphate from D-glucose: step 2/4. This chain is Glucose-6-phosphate isomerase, cytosolic 1 (PGIC1), found in Clarkia williamsonii.